The following is a 102-amino-acid chain: Small ribosomal subunit protein uS10 (102 aa).

This sequence belongs to the universal ribosomal protein uS10 family. Part of the 30S ribosomal subunit.

In terms of biological role, involved in the binding of tRNA to the ribosomes. The chain is Small ribosomal subunit protein uS10 from Shouchella clausii (strain KSM-K16) (Alkalihalobacillus clausii).